A 122-amino-acid chain; its full sequence is Large ribosomal subunit protein uL14 (122 aa).

The protein belongs to the universal ribosomal protein uL14 family. In terms of assembly, part of the 50S ribosomal subunit. Forms a cluster with proteins L3 and L19. In the 70S ribosome, L14 and L19 interact and together make contacts with the 16S rRNA in bridges B5 and B8.

Functionally, binds to 23S rRNA. Forms part of two intersubunit bridges in the 70S ribosome. In Francisella philomiragia subsp. philomiragia (strain ATCC 25017 / CCUG 19701 / FSC 153 / O#319-036), this protein is Large ribosomal subunit protein uL14.